The sequence spans 495 residues: Glycerol kinase (495 aa).

Thr-11 provides a ligand contact to ADP. Positions 11, 12, and 13 each coordinate ATP. Position 11 (Thr-11) interacts with sn-glycerol 3-phosphate. Arg-15 is a binding site for ADP. Residues Arg-81, Glu-82, Tyr-133, and Asp-242 each contribute to the sn-glycerol 3-phosphate site. The glycerol site is built by Arg-81, Glu-82, Tyr-133, Asp-242, and Gln-243. 2 residues coordinate ADP: Thr-264 and Gly-307. ATP is bound by residues Thr-264, Gly-307, Gln-311, and Gly-408. Gly-408 contacts ADP.

Belongs to the FGGY kinase family.

The catalysed reaction is glycerol + ATP = sn-glycerol 3-phosphate + ADP + H(+). The protein operates within polyol metabolism; glycerol degradation via glycerol kinase pathway; sn-glycerol 3-phosphate from glycerol: step 1/1. Its activity is regulated as follows. Inhibited by fructose 1,6-bisphosphate (FBP). Its function is as follows. Key enzyme in the regulation of glycerol uptake and metabolism. Catalyzes the phosphorylation of glycerol to yield sn-glycerol 3-phosphate. The chain is Glycerol kinase from Geobacter sp. (strain M21).